Reading from the N-terminus, the 139-residue chain is Transcription antitermination protein NusB (139 aa).

It belongs to the NusB family.

In terms of biological role, involved in transcription antitermination. Required for transcription of ribosomal RNA (rRNA) genes. Binds specifically to the boxA antiterminator sequence of the ribosomal RNA (rrn) operons. In Cronobacter sakazakii (strain ATCC BAA-894) (Enterobacter sakazakii), this protein is Transcription antitermination protein NusB.